A 123-amino-acid chain; its full sequence is Large ribosomal subunit protein uL14c (123 aa).

This sequence belongs to the universal ribosomal protein uL14 family. In terms of assembly, part of the 50S ribosomal subunit.

Its subcellular location is the plastid. The protein resides in the chloroplast. Binds to 23S rRNA. The sequence is that of Large ribosomal subunit protein uL14c from Brachypodium distachyon (Purple false brome).